Reading from the N-terminus, the 456-residue chain is UDP-N-acetylmuramate--L-alanine ligase (456 aa).

112-118 is an ATP binding site; the sequence is GTHGKTT.

It belongs to the MurCDEF family.

The protein resides in the cytoplasm. The enzyme catalyses UDP-N-acetyl-alpha-D-muramate + L-alanine + ATP = UDP-N-acetyl-alpha-D-muramoyl-L-alanine + ADP + phosphate + H(+). The protein operates within cell wall biogenesis; peptidoglycan biosynthesis. Cell wall formation. This chain is UDP-N-acetylmuramate--L-alanine ligase, found in Trichlorobacter lovleyi (strain ATCC BAA-1151 / DSM 17278 / SZ) (Geobacter lovleyi).